Consider the following 370-residue polypeptide: Putative agmatine deiminase (370 aa).

Catalysis depends on Cys-361, which acts as the Amidino-cysteine intermediate.

It belongs to the agmatine deiminase family.

It carries out the reaction agmatine + H2O = N-carbamoylputrescine + NH4(+). This Shewanella putrefaciens (strain CN-32 / ATCC BAA-453) protein is Putative agmatine deiminase.